The sequence spans 213 residues: Large ribosomal subunit protein uL1 (213 aa).

The protein belongs to the universal ribosomal protein uL1 family. Part of the 50S ribosomal subunit.

Its function is as follows. Binds directly to 23S rRNA. Probably involved in E site tRNA release. Functionally, protein L1 is also a translational repressor protein, it controls the translation of its operon by binding to its mRNA. This is Large ribosomal subunit protein uL1 from Methanococcus maripaludis (strain C6 / ATCC BAA-1332).